Reading from the N-terminus, the 403-residue chain is Tryptophan synthase beta chain 1 (403 aa).

Lysine 96 bears the N6-(pyridoxal phosphate)lysine mark.

The protein belongs to the TrpB family. In terms of assembly, tetramer of two alpha and two beta chains. Pyridoxal 5'-phosphate is required as a cofactor.

The catalysed reaction is (1S,2R)-1-C-(indol-3-yl)glycerol 3-phosphate + L-serine = D-glyceraldehyde 3-phosphate + L-tryptophan + H2O. It participates in amino-acid biosynthesis; L-tryptophan biosynthesis; L-tryptophan from chorismate: step 5/5. Functionally, the beta subunit is responsible for the synthesis of L-tryptophan from indole and L-serine. The sequence is that of Tryptophan synthase beta chain 1 (trpB1) from Wolinella succinogenes (strain ATCC 29543 / DSM 1740 / CCUG 13145 / JCM 31913 / LMG 7466 / NCTC 11488 / FDC 602W) (Vibrio succinogenes).